A 666-amino-acid chain; its full sequence is tRNA 5-methylaminomethyl-2-thiouridine biosynthesis bifunctional protein MnmC (666 aa).

Residues 1–245 (MKQYAIQPAT…KREMLCGVME (245 aa)) form a tRNA (mnm(5)s(2)U34)-methyltransferase region. Residues 270 to 666 (IGGGIASALL…RKLLKGKAVK (397 aa)) are FAD-dependent cmnm(5)s(2)U34 oxidoreductase.

It in the N-terminal section; belongs to the methyltransferase superfamily. tRNA (mnm(5)s(2)U34)-methyltransferase family. This sequence in the C-terminal section; belongs to the DAO family. FAD is required as a cofactor.

It localises to the cytoplasm. It catalyses the reaction 5-aminomethyl-2-thiouridine(34) in tRNA + S-adenosyl-L-methionine = 5-methylaminomethyl-2-thiouridine(34) in tRNA + S-adenosyl-L-homocysteine + H(+). Its function is as follows. Catalyzes the last two steps in the biosynthesis of 5-methylaminomethyl-2-thiouridine (mnm(5)s(2)U) at the wobble position (U34) in tRNA. Catalyzes the FAD-dependent demodification of cmnm(5)s(2)U34 to nm(5)s(2)U34, followed by the transfer of a methyl group from S-adenosyl-L-methionine to nm(5)s(2)U34, to form mnm(5)s(2)U34. This is tRNA 5-methylaminomethyl-2-thiouridine biosynthesis bifunctional protein MnmC from Salmonella typhi.